Reading from the N-terminus, the 379-residue chain is Alcohol dehydrogenase class-3 (379 aa).

Alanine 2 is subject to N-acetylalanine. Position 47 (cysteine 47) interacts with Zn(2+). Residue histidine 48 coordinates NAD(+). The an alcohol site is built by threonine 49 and histidine 69. Zn(2+) is bound by residues histidine 69, glutamate 70, cysteine 99, cysteine 102, cysteine 105, cysteine 113, and cysteine 177. Residues 202 to 207, aspartate 226, lysine 231, isoleucine 272, 295 to 297, 320 to 322, and arginine 372 each bind NAD(+); these read GLGTVG, VGV, and TAF.

This sequence belongs to the zinc-containing alcohol dehydrogenase family. Class-III subfamily. In terms of assembly, homodimer. It depends on Zn(2+) as a cofactor. In terms of tissue distribution, ubiquitous.

The protein resides in the cytoplasm. It carries out the reaction a primary alcohol + NAD(+) = an aldehyde + NADH + H(+). It catalyses the reaction a secondary alcohol + NAD(+) = a ketone + NADH + H(+). The enzyme catalyses S-(hydroxymethyl)glutathione + NADP(+) = S-formylglutathione + NADPH + H(+). The catalysed reaction is S-(hydroxymethyl)glutathione + NAD(+) = S-formylglutathione + NADH + H(+). It carries out the reaction S-nitrosoglutathione + NADH + H(+) = S-(hydroxysulfenamide)glutathione + NAD(+). Its activity is regulated as follows. Repressed by thiol-modifying agents N-ethylmaleimide (NEM) and 5,5-dithio-bis-(2-nitrobenzoic acid) (DTNB), as well as by methyl methanethiosulfonate (MMTS) in a dose-dependent manner. Inhibited by hydrogen peroxide H(2)O(2). Functionally, alcohol dehydrogenase catalyzing the reduction of nitrosoglutathione. Can also use long-chain alcohols including cinnamyl alcohol and geraniol, and, to a lower extent, octanol. Plays a central role in formaldehyde detoxification. Not able to use ethanol (EtOH) as substrate. This chain is Alcohol dehydrogenase class-3, found in Arabidopsis thaliana (Mouse-ear cress).